A 423-amino-acid chain; its full sequence is Gamma-glutamyl phosphate reductase (423 aa).

Low complexity predominate over residues 1-14 (MTLQAAPRSAAAQQ). Residues 1 to 25 (MTLQAAPRSAAAQQREPDLRQEVHD) form a disordered region. The span at 15 to 25 (REPDLRQEVHD) shows a compositional bias: basic and acidic residues.

Belongs to the gamma-glutamyl phosphate reductase family.

It is found in the cytoplasm. It catalyses the reaction L-glutamate 5-semialdehyde + phosphate + NADP(+) = L-glutamyl 5-phosphate + NADPH + H(+). It participates in amino-acid biosynthesis; L-proline biosynthesis; L-glutamate 5-semialdehyde from L-glutamate: step 2/2. Catalyzes the NADPH-dependent reduction of L-glutamate 5-phosphate into L-glutamate 5-semialdehyde and phosphate. The product spontaneously undergoes cyclization to form 1-pyrroline-5-carboxylate. The protein is Gamma-glutamyl phosphate reductase of Mycobacterium marinum (strain ATCC BAA-535 / M).